The primary structure comprises 203 residues: uncharacterized protein (203 aa).

This is an uncharacterized protein from Caldicellulosiruptor sp. (strain Rt8B.4).